Consider the following 446-residue polypeptide: Putative diacyglycerol O-acyltransferase MT3481 (446 aa).

The active-site Proton acceptor is His-129. The tract at residues 425–446 (SRALPSAARRGRPSVPTARARH) is disordered.

Belongs to the long-chain O-acyltransferase family.

It catalyses the reaction an acyl-CoA + a 1,2-diacyl-sn-glycerol = a triacyl-sn-glycerol + CoA. Its pathway is glycerolipid metabolism; triacylglycerol biosynthesis. The chain is Putative diacyglycerol O-acyltransferase MT3481 from Mycobacterium tuberculosis (strain CDC 1551 / Oshkosh).